A 246-amino-acid polypeptide reads, in one-letter code: Pyridoxine 5'-phosphate synthase (246 aa).

Asparagine 12 lines the 3-amino-2-oxopropyl phosphate pocket. 1-deoxy-D-xylulose 5-phosphate is bound at residue 14–15 (DH). Arginine 23 is a 3-amino-2-oxopropyl phosphate binding site. Histidine 48 serves as the catalytic Proton acceptor. The 1-deoxy-D-xylulose 5-phosphate site is built by arginine 50 and histidine 55. The Proton acceptor role is filled by glutamate 75. Threonine 105 is a binding site for 1-deoxy-D-xylulose 5-phosphate. Histidine 196 functions as the Proton donor in the catalytic mechanism. 3-amino-2-oxopropyl phosphate-binding positions include glycine 197 and 218 to 219 (GH).

Belongs to the PNP synthase family. Homooctamer; tetramer of dimers.

The protein localises to the cytoplasm. It catalyses the reaction 3-amino-2-oxopropyl phosphate + 1-deoxy-D-xylulose 5-phosphate = pyridoxine 5'-phosphate + phosphate + 2 H2O + H(+). Its pathway is cofactor biosynthesis; pyridoxine 5'-phosphate biosynthesis; pyridoxine 5'-phosphate from D-erythrose 4-phosphate: step 5/5. Functionally, catalyzes the complicated ring closure reaction between the two acyclic compounds 1-deoxy-D-xylulose-5-phosphate (DXP) and 3-amino-2-oxopropyl phosphate (1-amino-acetone-3-phosphate or AAP) to form pyridoxine 5'-phosphate (PNP) and inorganic phosphate. The chain is Pyridoxine 5'-phosphate synthase from Thiobacillus denitrificans (strain ATCC 25259 / T1).